Consider the following 126-residue polypeptide: Aspartate 1-decarboxylase 2 (126 aa).

The active-site Schiff-base intermediate with substrate; via pyruvic acid is the Ser25. Ser25 is modified (pyruvic acid (Ser)). Thr57 contributes to the substrate binding site. The Proton donor role is filled by Tyr58. Residue 73–75 (GSA) coordinates substrate.

This sequence belongs to the PanD family. Heterooctamer of four alpha and four beta subunits. Requires pyruvate as cofactor. Is synthesized initially as an inactive proenzyme, which is activated by self-cleavage at a specific serine bond to produce a beta-subunit with a hydroxyl group at its C-terminus and an alpha-subunit with a pyruvoyl group at its N-terminus.

The protein localises to the cytoplasm. It carries out the reaction L-aspartate + H(+) = beta-alanine + CO2. Its pathway is cofactor biosynthesis; (R)-pantothenate biosynthesis; beta-alanine from L-aspartate: step 1/1. Functionally, catalyzes the pyruvoyl-dependent decarboxylation of aspartate to produce beta-alanine. This chain is Aspartate 1-decarboxylase 2, found in Polaromonas sp. (strain JS666 / ATCC BAA-500).